We begin with the raw amino-acid sequence, 528 residues long: Calcium-dependent protein kinase 4 (528 aa).

Positions 1 to 36 (MGQEVSSVNNTKNEHHKTNKKSLKGGNERHEMKESS) are disordered. Residue Gly-2 is the site of N-myristoyl glycine attachment. Residues 14 to 23 (EHHKTNKKSL) show a composition bias toward basic residues. The region spanning 71–329 (KGIKILGKGS…RDALEHEWIK (259 aa)) is the Protein kinase domain. Residues 76–84 (LGKGSFGEV) and Lys-99 each bind ATP. The active-site Proton acceptor is Asp-193. A J domain autoinhibitory motif motif is present at residues 350-358 (NIRQFQSTQ). The tract at residues 350–386 (NIRQFQSTQKLAQAALLYMGSKLTTIDETKELTKIFK) is j domain. A J domain EF-hand interaction motif motif is present at residues 359–368 (KLAQAALLYM). EF-hand domains follow at residues 376 to 411 (DETKELTKIFKKMDKNGDGQLDRNELIIGYKELLKL), 427 to 458 (EVDQILNSIDLDQNGYIEYSEFLTVSIDRKLL), 459 to 494 (LSTERLEKAFKLFDKDGSGKISANELAQLFGLSDVS), and 496 to 528 (ECWKTVLKEVDQNNDGEIDFKEFRDMLVKLCNY). Positions 389, 391, 393, 395, 400, 436, 438, 440, 442, 447, 472, 474, 476, 478, 483, 506, 508, 510, 512, and 517 each coordinate Ca(2+).

Belongs to the protein kinase superfamily. Ser/Thr protein kinase family. CDPK subfamily. As to quaternary structure, may interact with the pre-replication MCM complex prior male gametogenesis activation. The cofactor is Mg(2+). Myristoylated; myristoylation may target it to different subcellular compartments. During male gametogenesis, myristoylation is required to initiate DNA replication but not for mitotic spindle assembly or axoneme activation. In terms of processing, not palmitoylated. Post-translationally, may be autophosphorylated on Thr-234 in vitro.

The protein resides in the cytoplasm. Its subcellular location is the cell membrane. It carries out the reaction L-seryl-[protein] + ATP = O-phospho-L-seryl-[protein] + ADP + H(+). The enzyme catalyses L-threonyl-[protein] + ATP = O-phospho-L-threonyl-[protein] + ADP + H(+). Its activity is regulated as follows. Activated by calcium. Upon calcium binding to the EF-hand domains, the C-terminus of the junction domain (J domain) undergoes a conformational change which results in the dissociation of the pseudo-substrate inhibitory motif from the catalytic domain. This, in turn, may facilitate the autophosphorylation of the activation loop at Thr-234, which leads to the kinase activation. Intracellular calcium increase is triggered by xanthurenic acid (XA), a small mosquito molecule that induces the differentiation of specialized transmission stages, the gametocytes, into male and female gametes. Activated by a decrease in temperature (20 degrees Celsius) and an increase in pH (7.6) occurring when the parasite is ingested by in the mosquito. In terms of biological role, calcium-dependent protein kinase which acts as a sensor and effector of intracellular Ca(2+) levels probably in part downstream of cGMP-activated PKG kinase. Plays a central role in the host erythrocytes and hepatocytes infection cycles, sexual reproduction and mosquito transmission of the parasite. During the liver stage, involved in sporozoite motility and thus in sporozoite invasion of host hepatocytes, probably together with CDPK1 and CDPK5. Involved in merosome egress from host hepatocytes, probably together with CDPK5. During the asexual blood stage, involved in merozoite invasion of host erythrocytes and motility by stabilizing the inner membrane complex, a structure below the plasma membrane which acts as an anchor for the glidosome, an acto-myosin motor. Required for cell cycle progression in the male gametocyte. During male gametogenesis in the mosquito gut, required to initiate the first round of DNA replication, probably by facilitating the assembly of the pre-replicative MCM complex, to assemble the first mitotic spindle and, at the end of gametogenesis, to initiate axoneme motility, cytokinesis and subsequent exflagellation. For each of these steps, may phosphorylate SOC1, SOC2 and SOC3, respectively. Together with CDPK1, regulates ookinete gliding in the mosquito host midgut. The chain is Calcium-dependent protein kinase 4 from Plasmodium falciparum (isolate 3D7).